Here is a 233-residue protein sequence, read N- to C-terminus: Adenosylcobinamide-GDP ribazoletransferase (233 aa).

Transmembrane regions (helical) follow at residues 24-44 (LWAFPLVALVSSALPTLVLYL), 46-66 (LPLSNVLAVLALYFTIGLLHL), 96-116 (IAGLFAVVMVLFLQVYSLQLV), 117-137 (PFYAIFLAELNSKLAMLLALA), 156-176 (SGQLLGGFIFYAILLVPVVVY), 184-204 (LLGLAFGGYAIKVALDNFGGI), and 209-229 (IGAIAEITRAGTLLVVAFAGA).

It belongs to the CobS family. It depends on Mg(2+) as a cofactor.

The protein localises to the cell membrane. The catalysed reaction is alpha-ribazole + adenosylcob(III)inamide-GDP = adenosylcob(III)alamin + GMP + H(+). The enzyme catalyses alpha-ribazole 5'-phosphate + adenosylcob(III)inamide-GDP = adenosylcob(III)alamin 5'-phosphate + GMP + H(+). It functions in the pathway cofactor biosynthesis; adenosylcobalamin biosynthesis; adenosylcobalamin from cob(II)yrinate a,c-diamide: step 7/7. Its function is as follows. Joins adenosylcobinamide-GDP and alpha-ribazole to generate adenosylcobalamin (Ado-cobalamin). Also synthesizes adenosylcobalamin 5'-phosphate from adenosylcobinamide-GDP and alpha-ribazole 5'-phosphate. The protein is Adenosylcobinamide-GDP ribazoletransferase of Thermococcus onnurineus (strain NA1).